The chain runs to 67 residues: Conotoxin VnMMSK-03 (67 aa).

An N-terminal signal peptide occupies residues 1–20 (MMSKLGVVLTICLLPFPLTA). A propeptide spanning residues 21-50 (LPMDGDQPADLPALRTQDFEPERSPWFDPV) is cleaved from the precursor. 3 disulfide bridges follow: Cys-53-Cys-65, Cys-54-Cys-61, and Cys-58-Cys-64. Pro-63 is modified (4-hydroxyproline).

This sequence belongs to the conotoxin M superfamily. As to expression, expressed by the venom duct.

Its subcellular location is the secreted. This is Conotoxin VnMMSK-03 from Conus ventricosus (Mediterranean cone).